A 420-amino-acid chain; its full sequence is Exodeoxyribonuclease 7 large subunit (420 aa).

The protein belongs to the XseA family. In terms of assembly, heterooligomer composed of large and small subunits.

It is found in the cytoplasm. The catalysed reaction is Exonucleolytic cleavage in either 5'- to 3'- or 3'- to 5'-direction to yield nucleoside 5'-phosphates.. Bidirectionally degrades single-stranded DNA into large acid-insoluble oligonucleotides, which are then degraded further into small acid-soluble oligonucleotides. The sequence is that of Exodeoxyribonuclease 7 large subunit from Helicobacter pylori (strain ATCC 700392 / 26695) (Campylobacter pylori).